The chain runs to 254 residues: UPF0246 protein CPE2152 (254 aa).

The protein belongs to the UPF0246 family.

The chain is UPF0246 protein CPE2152 from Clostridium perfringens (strain 13 / Type A).